We begin with the raw amino-acid sequence, 485 residues long: Glutamyl-tRNA(Gln) amidotransferase subunit A (485 aa).

Active-site charge relay system residues include Lys-82 and Ser-157. The active-site Acyl-ester intermediate is the Ser-181.

The protein belongs to the amidase family. GatA subfamily. As to quaternary structure, heterotrimer of A, B and C subunits.

It catalyses the reaction L-glutamyl-tRNA(Gln) + L-glutamine + ATP + H2O = L-glutaminyl-tRNA(Gln) + L-glutamate + ADP + phosphate + H(+). Allows the formation of correctly charged Gln-tRNA(Gln) through the transamidation of misacylated Glu-tRNA(Gln) in organisms which lack glutaminyl-tRNA synthetase. The reaction takes place in the presence of glutamine and ATP through an activated gamma-phospho-Glu-tRNA(Gln). This Treponema denticola (strain ATCC 35405 / DSM 14222 / CIP 103919 / JCM 8153 / KCTC 15104) protein is Glutamyl-tRNA(Gln) amidotransferase subunit A.